Reading from the N-terminus, the 152-residue chain is UPF0225 protein YchJ (152 aa).

Belongs to the UPF0225 family.

The sequence is that of UPF0225 protein YchJ from Escherichia coli O7:K1 (strain IAI39 / ExPEC).